The sequence spans 122 residues: Large ribosomal subunit protein uL14 (122 aa).

The protein belongs to the universal ribosomal protein uL14 family. As to quaternary structure, part of the 50S ribosomal subunit. Forms a cluster with proteins L3 and L19. In the 70S ribosome, L14 and L19 interact and together make contacts with the 16S rRNA in bridges B5 and B8.

Functionally, binds to 23S rRNA. Forms part of two intersubunit bridges in the 70S ribosome. This is Large ribosomal subunit protein uL14 from Sorangium cellulosum (strain So ce56) (Polyangium cellulosum (strain So ce56)).